The chain runs to 545 residues: CTP synthase (545 aa).

The tract at residues 1 to 266 (MTTNYIFVTG…DDYICKRFSL (266 aa)) is amidoligase domain. Serine 14 contributes to the CTP binding site. Residue serine 14 participates in UTP binding. Residues 15–20 (SLGKGI) and aspartate 72 each bind ATP. Residues aspartate 72 and glutamate 140 each contribute to the Mg(2+) site. CTP-binding positions include 147-149 (DIE), 187-192 (KTKPTQ), and lysine 223. UTP is bound by residues 187-192 (KTKPTQ) and lysine 223. 239–241 (KDV) is an ATP binding site. The Glutamine amidotransferase type-1 domain occupies 291–542 (TIGMVGKYIE…VKAANEHQKR (252 aa)). Glycine 352 is an L-glutamine binding site. Residue cysteine 379 is the Nucleophile; for glutamine hydrolysis of the active site. L-glutamine contacts are provided by residues 380-383 (LGMQ), glutamate 403, and arginine 470. Active-site residues include histidine 515 and glutamate 517.

The protein belongs to the CTP synthase family. As to quaternary structure, homotetramer.

It catalyses the reaction UTP + L-glutamine + ATP + H2O = CTP + L-glutamate + ADP + phosphate + 2 H(+). The catalysed reaction is L-glutamine + H2O = L-glutamate + NH4(+). It carries out the reaction UTP + NH4(+) + ATP = CTP + ADP + phosphate + 2 H(+). It functions in the pathway pyrimidine metabolism; CTP biosynthesis via de novo pathway; CTP from UDP: step 2/2. Allosterically activated by GTP, when glutamine is the substrate; GTP has no effect on the reaction when ammonia is the substrate. The allosteric effector GTP functions by stabilizing the protein conformation that binds the tetrahedral intermediate(s) formed during glutamine hydrolysis. Inhibited by the product CTP, via allosteric rather than competitive inhibition. In terms of biological role, catalyzes the ATP-dependent amination of UTP to CTP with either L-glutamine or ammonia as the source of nitrogen. Regulates intracellular CTP levels through interactions with the four ribonucleotide triphosphates. This Salmonella paratyphi A (strain ATCC 9150 / SARB42) protein is CTP synthase.